Here is a 199-residue protein sequence, read N- to C-terminus: dITP/XTP pyrophosphatase (199 aa).

12–17 (SGNAGK) is a binding site for substrate. Asp-73 serves as the catalytic Proton acceptor. Position 73 (Asp-73) interacts with Mg(2+). Substrate contacts are provided by residues Ser-74, 157 to 160 (FGYD), Lys-180, and 185 to 186 (HR).

Belongs to the HAM1 NTPase family. Homodimer. It depends on Mg(2+) as a cofactor.

The catalysed reaction is XTP + H2O = XMP + diphosphate + H(+). It catalyses the reaction dITP + H2O = dIMP + diphosphate + H(+). The enzyme catalyses ITP + H2O = IMP + diphosphate + H(+). Functionally, pyrophosphatase that catalyzes the hydrolysis of nucleoside triphosphates to their monophosphate derivatives, with a high preference for the non-canonical purine nucleotides XTP (xanthosine triphosphate), dITP (deoxyinosine triphosphate) and ITP. Seems to function as a house-cleaning enzyme that removes non-canonical purine nucleotides from the nucleotide pool, thus preventing their incorporation into DNA/RNA and avoiding chromosomal lesions. The protein is dITP/XTP pyrophosphatase of Neisseria meningitidis serogroup A / serotype 4A (strain DSM 15465 / Z2491).